The sequence spans 1674 residues: Kinesin-like protein KIF14 (1674 aa).

The interval 1–391 (MSVHTSHSRH…TEPDSLKVEN (391 aa)) is required for PRC1-binding. Disordered stretches follow at residues 132 to 158 (ETLNPVGGNPGSDSASQASRTEAKGVN) and 171 to 374 (KDSN…PEEN). 2 stretches are compositionally biased toward polar residues: residues 142–151 (GSDSASQASR) and 202–214 (SRAPVGSQRQTEA). Serine 257 is subject to Phosphoserine. The residue at position 262 (threonine 262) is a Phosphothreonine. Residues 267–279 (VLEHRWTPRHDPP) show a composition bias toward basic and acidic residues. Positions 302–311 (TFRSASSESR) are enriched in polar residues. Over residues 317–329 (VPEHRWTPRHDLP) the composition is skewed to basic and acidic residues. Residues 391–772 (NSQVTVAVRV…AAQRSNRNID (382 aa)) are required for microtubule-binding with high affinity. The Kinesin motor domain maps to 393–736 (QVTVAVRVRP…LRYATQARLI (344 aa)). 482–489 (GQTGSGKS) contributes to the ATP binding site. Residues 743 to 826 (NEDMNAKLIR…QETKELQKAG (84 aa)) adopt a coiled-coil conformation. In terms of domain architecture, FHA spans 860–911 (TTVGKHTPSSSHDIQLSGVLIADDHCTIRNFGGTVSIVPAGEAKTYVNGTHI). The segment at 936-1674 (PVEVQKGKKL…DCTPNRIQWV (739 aa)) is required for CIT-binding. Residues 961–1110 (EFAKNELLTA…VQMLQENRGN (150 aa)) adopt a coiled-coil conformation. Phosphoserine occurs at positions 973 and 1326. Residues 1618–1674 (GLSKPWESCSSNSKEEQCKSDRADCGKSGPRRACEPHGDATPAVSSGDCTPNRIQWV) are disordered. A compositionally biased stretch (basic and acidic residues) spans 1630-1642 (SKEEQCKSDRADC). Positions 1660–1674 (AVSSGDCTPNRIQWV) are enriched in polar residues.

Belongs to the TRAFAC class myosin-kinesin ATPase superfamily. Kinesin family. Directly interacts with PRC1 within a complex also containing KIF4A, KIF20A and KIF23; targets to the central spindle. Directly interacts with CIT depending on the activation state of the kinase (stronger interaction with the kinase-dead form); targets to the midbody. Interacts with ARRB2; the interaction is detected in the nucleus upon OR1D2 stimulation. Interacts with AKT1; the interaction is detected in the plasma membrane upon INS stimulation and promotes AKT1 phosphorylation. Interacts with SVIL; at midbody during cytokinesis. Interacts with RADIL (via PDZ domain); recruits RADIL to the microtubule network restricting RADIL from interaction with activated RAP1A.

The protein localises to the nucleus. It is found in the cytoplasm. It localises to the cytoskeleton. Its subcellular location is the spindle. The protein resides in the midbody. Its function is as follows. Microtubule motor protein that binds to microtubules with high affinity through each tubulin heterodimer and has an ATPase activity. Plays a role in many processes like cell division, cytokinesis and also in cell proliferation and apoptosis. During cytokinesis, targets to central spindle and midbody through its interaction with PRC1 and CIT respectively. Regulates cell growth through regulation of cell cycle progression and cytokinesis. During cell cycle progression acts through SCF-dependent proteasomal ubiquitin-dependent protein catabolic process which controls CDKN1B degradation, resulting in positive regulation of cyclins, including CCNE1, CCND1 and CCNB1. During late neurogenesis, regulates the cerebellar and cerebral cortex development and olfactory bulb development through regulation of apoptosis, cell proliferation and cell division. Also is required for chromosome congression and alignment during mitotic cell cycle process. Regulates cell spreading, focal adhesion dynamics, and cell migration through its interaction with RADIL resulting in regulation of RAP1A-mediated inside-out integrin activation by tethering RADIL on microtubules. The chain is Kinesin-like protein KIF14 from Mus musculus (Mouse).